The primary structure comprises 552 residues: CTP synthase (552 aa).

The segment at 1 to 273 is amidoligase domain; it reads MSESKKNPET…LTPIARRFNM (273 aa). Residue S21 coordinates CTP. S21 lines the UTP pocket. Residues 22–27 and D79 each bind ATP; that span reads SLGKGI. Residues D79 and E147 each coordinate Mg(2+). CTP contacts are provided by residues 154-156, 194-199, and K230; these read DIE and KTKPTQ. UTP-binding positions include 194–199 and K230; that span reads KTKPTQ. A Glutamine amidotransferase type-1 domain is found at 298 to 548; the sequence is TIAFVGKYLS…IQKSLELKKV (251 aa). Residue G359 coordinates L-glutamine. The active-site Nucleophile; for glutamine hydrolysis is C386. L-glutamine is bound by residues 387-390, E410, and R478; that span reads LGMQ. Residues H521 and E523 contribute to the active site.

Belongs to the CTP synthase family. As to quaternary structure, homotetramer.

The enzyme catalyses UTP + L-glutamine + ATP + H2O = CTP + L-glutamate + ADP + phosphate + 2 H(+). It catalyses the reaction L-glutamine + H2O = L-glutamate + NH4(+). The catalysed reaction is UTP + NH4(+) + ATP = CTP + ADP + phosphate + 2 H(+). It functions in the pathway pyrimidine metabolism; CTP biosynthesis via de novo pathway; CTP from UDP: step 2/2. Its activity is regulated as follows. Allosterically activated by GTP, when glutamine is the substrate; GTP has no effect on the reaction when ammonia is the substrate. The allosteric effector GTP functions by stabilizing the protein conformation that binds the tetrahedral intermediate(s) formed during glutamine hydrolysis. Inhibited by the product CTP, via allosteric rather than competitive inhibition. Catalyzes the ATP-dependent amination of UTP to CTP with either L-glutamine or ammonia as the source of nitrogen. Regulates intracellular CTP levels through interactions with the four ribonucleotide triphosphates. This Wolinella succinogenes (strain ATCC 29543 / DSM 1740 / CCUG 13145 / JCM 31913 / LMG 7466 / NCTC 11488 / FDC 602W) (Vibrio succinogenes) protein is CTP synthase.